A 177-amino-acid polypeptide reads, in one-letter code: Flavodoxin (177 aa).

A Flavodoxin-like domain is found at 4-173 (IGIFFGSDTG…RIDTWLDKLK (170 aa)).

The protein belongs to the flavodoxin family. Requires FMN as cofactor.

Its function is as follows. Low-potential electron donor to a number of redox enzymes. NifF is the electron donor to nitrogenase. This chain is Flavodoxin (nifF), found in Enterobacter agglomerans (Erwinia herbicola).